The following is a 143-amino-acid chain: MALERTFSIIKPDAVAKNVIGAIYNRFESAGLRIVASKMLHLSKEQAEGFYAEHSERPFFGALVEFMTSGPVMVQVLEGENAVLKNREIMGATNPAEALAGTLRADYAASIDENACHGSDAPESAAREIAYFFSDEEICPRTR.

ATP-binding residues include Lys-11, Phe-59, Arg-87, Thr-93, Arg-104, and Asn-114. His-117 (pros-phosphohistidine intermediate) is an active-site residue.

It belongs to the NDK family. Homotetramer. Mg(2+) serves as cofactor.

The protein resides in the cytoplasm. The enzyme catalyses a 2'-deoxyribonucleoside 5'-diphosphate + ATP = a 2'-deoxyribonucleoside 5'-triphosphate + ADP. It catalyses the reaction a ribonucleoside 5'-diphosphate + ATP = a ribonucleoside 5'-triphosphate + ADP. Functionally, major role in the synthesis of nucleoside triphosphates other than ATP. The ATP gamma phosphate is transferred to the NDP beta phosphate via a ping-pong mechanism, using a phosphorylated active-site intermediate. This chain is Nucleoside diphosphate kinase, found in Pseudoalteromonas atlantica (strain T6c / ATCC BAA-1087).